The chain runs to 751 residues: Conserved oligomeric Golgi complex subunit 5 (751 aa).

Disordered stretches follow at residues 1–21 and 244–263; these read MVTG…DDND and SPTH…KTPQ.

This sequence belongs to the COG5 family. As to quaternary structure, component of the conserved oligomeric Golgi complex which is composed of eight different subunits and is required for normal Golgi morphology and localization.

It is found in the golgi apparatus membrane. Its function is as follows. Required for normal Golgi function and necessary during spermatogenesis. Required for cleavage furrow ingression during cytokinesis in dividing spermatocytes and for the extensive polarized cell growth that accompanies spermatid elongation. The chain is Conserved oligomeric Golgi complex subunit 5 (fws) from Drosophila melanogaster (Fruit fly).